The following is a 665-amino-acid chain: Methionine--tRNA ligase (665 aa).

Residues 12–22 carry the 'HIGH' region motif; that stretch reads YYPSGKLHIGS. The 'KMSKS' region signature appears at 308-312; that stretch reads KMSKS. Lys-311 contributes to the ATP binding site. Positions 562 to 665 constitute a tRNA-binding domain; that stretch reads TFDAVEIRVA…SSVPNGSIIG (104 aa).

It belongs to the class-I aminoacyl-tRNA synthetase family. MetG type 2B subfamily. Homodimer.

The protein resides in the cytoplasm. The catalysed reaction is tRNA(Met) + L-methionine + ATP = L-methionyl-tRNA(Met) + AMP + diphosphate. Is required not only for elongation of protein synthesis but also for the initiation of all mRNA translation through initiator tRNA(fMet) aminoacylation. The polypeptide is Methionine--tRNA ligase (metG) (Streptococcus pyogenes serotype M1).